An 83-amino-acid chain; its full sequence is Small ribosomal subunit protein bS16 (83 aa).

Belongs to the bacterial ribosomal protein bS16 family.

The chain is Small ribosomal subunit protein bS16 from Herminiimonas arsenicoxydans.